The following is a 163-amino-acid chain: Transcriptional repressor NrdR (163 aa).

The segment at 1-22 (MRCPKCQSLKSSVIDSRQAEDG) is disordered. A zinc finger spans residues 3-34 (CPKCQSLKSSVIDSRQAEDGNTIRRRRSCDQC). One can recognise an ATP-cone domain in the interval 49-139 (LVVVKKDGTR…VYRSFKDVGE (91 aa)).

The protein belongs to the NrdR family. Requires Zn(2+) as cofactor.

Functionally, negatively regulates transcription of bacterial ribonucleotide reductase nrd genes and operons by binding to NrdR-boxes. The sequence is that of Transcriptional repressor NrdR from Streptococcus suis (strain 98HAH33).